Here is a 419-residue protein sequence, read N- to C-terminus: UDP-N-acetylglucosamine 1-carboxyvinyltransferase (419 aa).

22-23 (KN) contacts phosphoenolpyruvate. Arg91 lines the UDP-N-acetyl-alpha-D-glucosamine pocket. The Proton donor role is filled by Cys115. 2-(S-cysteinyl)pyruvic acid O-phosphothioketal is present on Cys115. UDP-N-acetyl-alpha-D-glucosamine is bound by residues 120-124 (RPVDL), 160-163 (KVSV), Asp305, and Val327.

It belongs to the EPSP synthase family. MurA subfamily.

The protein localises to the cytoplasm. It carries out the reaction phosphoenolpyruvate + UDP-N-acetyl-alpha-D-glucosamine = UDP-N-acetyl-3-O-(1-carboxyvinyl)-alpha-D-glucosamine + phosphate. Its pathway is cell wall biogenesis; peptidoglycan biosynthesis. Functionally, cell wall formation. Adds enolpyruvyl to UDP-N-acetylglucosamine. In Escherichia fergusonii (strain ATCC 35469 / DSM 13698 / CCUG 18766 / IAM 14443 / JCM 21226 / LMG 7866 / NBRC 102419 / NCTC 12128 / CDC 0568-73), this protein is UDP-N-acetylglucosamine 1-carboxyvinyltransferase.